We begin with the raw amino-acid sequence, 90 residues long: Small ribosomal subunit protein uS15 (90 aa).

This sequence belongs to the universal ribosomal protein uS15 family. Part of the 30S ribosomal subunit. Forms a bridge to the 50S subunit in the 70S ribosome, contacting the 23S rRNA.

Functionally, one of the primary rRNA binding proteins, it binds directly to 16S rRNA where it helps nucleate assembly of the platform of the 30S subunit by binding and bridging several RNA helices of the 16S rRNA. In terms of biological role, forms an intersubunit bridge (bridge B4) with the 23S rRNA of the 50S subunit in the ribosome. This chain is Small ribosomal subunit protein uS15, found in Helicobacter pylori (strain Shi470).